A 1056-amino-acid polypeptide reads, in one-letter code: MKIDVSKVIVIGSGAIKIGEAAEFDYSGSQALKALREEGIESVLVNPNVATIQTSYELADKVYLLPLKTEFIEKVIEKEKPDGILVGFGGQTALSLGVSLYKKGILDKYNVKVLGTPIEGIERALDREKFQKTMKKVGLPVPPSDAAKTPEEAIEIAESIGFPVIVRVSFNLGGRGSFIARSREEFEKYIIRAFAQSEIRKVLVEKYLNGWKEIEFEVVRDKAGNSVAVVCLENVDPMGVHTGESIVVGPSQTLTNREYQMLRDAAIRVADAIELIGEGNVQLALSPNSEEYYVIETNPRMSRSSALASKVTGYPLAYIATKLAIGYTLDELRNTVTGITTAAFEPSLDYVAVKIPRWDFKKFEEVNKSIGSEMKSIGEVMAIGRNLHEAFQKAIRMLDIGDELIGKYYLEDEPLENVLERLKKKEPYLLMHIAKALRLGATVEDIHKITKVDKFFIYVIEDLVKIAEELRKNPTEELIREAKRLGFSDWEIELLTKRKVKKKWKPVVKNIDTLAGEFPAKTNYLYVTYDGVENDIPKPKKPSILVLGAGVFRIGVSVEFDWAVVNFVNAIRKRGIEAAILNYNPETVSTDWDMSDRLYFEEITLERVLDIYEFERPIGVVAFAGGQLANSLAKKLENAGVKLLGTSGKSVDKAENRAKFSKLLEKLGIPQPEWISAESIDEAIKLAKKIEYPVIVRPSYVLSGTAMKVAWNEKELIDFLKEAASVSPEHPVLISKFIPGTEAEIDAVSDGKKVVGVTLEHIEGAGVHSGDSTMVTPWRTLSERNVKRIWEITYELAKELEIKGPFNVQFVIDKKPYVLELNLRTSRSMPFSSKSRGVNLMELSAQAVLDGELKIGVEGKYYEIPPVAYGVKSPQFSWAQLQGAYPFLGPEMRSTGEVAALGTHYEDALLKSWLSVKPNELPKTSALIYGWEKKNILKETAKILENLGITTYSIGGDIGEINISKQEAVNMIKEGKIDIIMTTGYAKDKDYEIRRLAADLNVPLVLDANLALELAKAIEWKTKTQEEFEIKELREYWIRKIEENVEEYAASVVLRR.

The segment at 1 to 399 is carboxyphosphate synthetic domain; that stretch reads MKIDVSKVIV…AFQKAIRMLD (399 aa). The ATP site is built by Arg127, Arg167, Gly173, Gly174, Lys206, Leu208, Glu213, Gly239, Val240, His241, Gln282, and Glu296. The region spanning 131 to 325 is the ATP-grasp 1 domain; sequence QKTMKKVGLP…LAYIATKLAI (195 aa). The Mg(2+) site is built by Gln282, Glu296, and Asn298. Gln282, Glu296, and Asn298 together coordinate Mn(2+). The oligomerization domain stretch occupies residues 400–536; sequence IGDELIGKYY…VTYDGVENDI (137 aa). The segment at 537 to 919 is carbamoyl phosphate synthetic domain; it reads PKPKKPSILV…LKSWLSVKPN (383 aa). The ATP-grasp 2 domain maps to 661-849; the sequence is SKLLEKLGIP…LMELSAQAVL (189 aa). The ATP site is built by Arg697, Lys736, Ile738, Glu742, Gly766, Val767, His768, Ser769, Gln809, and Glu820. 3 residues coordinate Mg(2+): Gln809, Glu820, and Asn822. Residues Gln809, Glu820, and Asn822 each coordinate Mn(2+). The region spanning 915 to 1043 is the MGS-like domain; sequence SVKPNELPKT…REYWIRKIEE (129 aa). The interval 920-1056 is allosteric domain; the sequence is ELPKTSALIY…EYAASVVLRR (137 aa).

Belongs to the CarB family. In terms of assembly, composed of two chains; the small (or glutamine) chain promotes the hydrolysis of glutamine to ammonia, which is used by the large (or ammonia) chain to synthesize carbamoyl phosphate. Tetramer of heterodimers (alpha,beta)4. Mg(2+) is required as a cofactor. Requires Mn(2+) as cofactor.

It catalyses the reaction hydrogencarbonate + L-glutamine + 2 ATP + H2O = carbamoyl phosphate + L-glutamate + 2 ADP + phosphate + 2 H(+). The enzyme catalyses hydrogencarbonate + NH4(+) + 2 ATP = carbamoyl phosphate + 2 ADP + phosphate + 2 H(+). It functions in the pathway amino-acid biosynthesis; L-arginine biosynthesis; carbamoyl phosphate from bicarbonate: step 1/1. It participates in pyrimidine metabolism; UMP biosynthesis via de novo pathway; (S)-dihydroorotate from bicarbonate: step 1/3. In terms of biological role, large subunit of the glutamine-dependent carbamoyl phosphate synthetase (CPSase). CPSase catalyzes the formation of carbamoyl phosphate from the ammonia moiety of glutamine, carbonate, and phosphate donated by ATP, constituting the first step of 2 biosynthetic pathways, one leading to arginine and/or urea and the other to pyrimidine nucleotides. The large subunit (synthetase) binds the substrates ammonia (free or transferred from glutamine from the small subunit), hydrogencarbonate and ATP and carries out an ATP-coupled ligase reaction, activating hydrogencarbonate by forming carboxy phosphate which reacts with ammonia to form carbamoyl phosphate. This chain is Carbamoyl phosphate synthase large chain, found in Pyrococcus furiosus (strain ATCC 43587 / DSM 3638 / JCM 8422 / Vc1).